A 484-amino-acid chain; its full sequence is MRHSKRTYCPDWDDKDWDYGKWRSSSSHKRRKRSHSSAQENKRCKYNHSKMCDSHYLESRSINEKDYHSRRYIDEYRNDYTQGCEPGHRQRDHESRYQNHSSKSSGRSGRSSYKSKHRIHHSTSHRRSHGKSHRRKRTRSVEDDEEGHLICQSGDVLSARYEIVDTLGEGAFGKVVECIDHKAGGRHVAVKIVKNVDRYCEAARSEIQVLEHLNTTDPNSTFRCVQMLEWFEHHGHICIVFELLGLSTYDFIKENGFLPFRLDHIRKMAYQICKSVNFLHSNKLTHTDLKPENILFVQSDYTEAYNPKIKRDERTLINPDIKVVDFGSATYDDEHHSTLVSTRHYRAPEVILALGWSQPCDVWSIGCILIEYYLGFTVFPTHDSKEHLAMMERILGPLPKHMIQKTRKRKYFHHDRLDWDEHSSAGRYVSRRCKPLKEFMLSQDVEHERLFDLIQKMLEYDPAKRITLREALKHPFFDLLKKSI.

The segment at 1–42 is disordered; that stretch reads MRHSKRTYCPDWDDKDWDYGKWRSSSSHKRRKRSHSSAQENK. Basic residues predominate over residues 26–35; that stretch reads SSHKRRKRSH. Ser-61 is subject to Phosphoserine. The disordered stretch occupies residues 79 to 146; it reads DYTQGCEPGH…RTRSVEDDEE (68 aa). Positions 86-97 are enriched in basic and acidic residues; sequence PGHRQRDHESRY. Low complexity predominate over residues 100 to 112; the sequence is HSSKSSGRSGRSS. Basic residues predominate over residues 113–138; sequence YKSKHRIHHSTSHRRSHGKSHRRKRT. Thr-138 is modified (phosphothreonine). Ser-140 carries the phosphoserine modification. The Protein kinase domain maps to 161-477; it reads YEIVDTLGEG…LREALKHPFF (317 aa). ATP contacts are provided by residues 167-175 and Lys-191; that span reads LGEGAFGKV. Asp-288 serves as the catalytic Proton acceptor.

It belongs to the protein kinase superfamily. CMGC Ser/Thr protein kinase family. Lammer subfamily. Interacts with PPIG and UBL5. Post-translationally, autophosphorylates on all three types of residues. As to expression, endothelial cells.

It is found in the nucleus. It catalyses the reaction L-seryl-[protein] + ATP = O-phospho-L-seryl-[protein] + ADP + H(+). The enzyme catalyses L-threonyl-[protein] + ATP = O-phospho-L-threonyl-[protein] + ADP + H(+). The catalysed reaction is L-tyrosyl-[protein] + ATP = O-phospho-L-tyrosyl-[protein] + ADP + H(+). With respect to regulation, regulates splicing of its own pre-mRNA according to its kinase activity; increased expression of the catalytically active form influences splicing to generate the catalytically inactive splicing variant lacking the kinase domain. Leucettine L41 inhibits its kinase activity and affects the regulation of alternative splicing mediated by phosphorylation of SR proteins. Dual specificity kinase acting on both serine/threonine and tyrosine-containing substrates. Phosphorylates serine- and arginine-rich (SR) proteins of the spliceosomal complex and may be a constituent of a network of regulatory mechanisms that enable SR proteins to control RNA splicing. Phosphorylates: SRSF1, SRSF3 and PTPN1. Regulates the alternative splicing of tissue factor (F3) pre-mRNA in endothelial cells. This Homo sapiens (Human) protein is Dual specificity protein kinase CLK1.